Consider the following 234-residue polypeptide: uncharacterized protein (234 aa).

Helical transmembrane passes span 32-52, 62-82, and 106-126; these read GLRT…VSVL, IPAQ…LKEG, and QGLF…NIAL.

This sequence belongs to the MgtC/SapB family.

Its subcellular location is the cell membrane. This is an uncharacterized protein from Synechocystis sp. (strain ATCC 27184 / PCC 6803 / Kazusa).